Consider the following 512-residue polypeptide: Spastin homolog (512 aa).

Residues 1–274 (MFAFSKGPAG…FKGLRQPVKG (274 aa)) lie on the Cytoplasmic side of the membrane. The stretch at 32–97 (IEMDELTKHA…MKLEKSAQDR (66 aa)) forms a coiled coil. The tract at residues 110–182 (KQSRSATVGP…SDTVHPEPPV (73 aa)) is disordered. The segment at 115–233 (ATVGPSRPAS…ERLLDEVLDN (119 aa)) is MTBD. The segment covering 137–163 (APEKKNAAKAKENDENRHVCSRGDRCG) has biased composition (basic and acidic residues). Residues 275-294 (ILLFGPPGNGKTLLAKAVAG) constitute an intramembrane region (helical). 279-286 (GPPGNGKT) provides a ligand contact to ATP. Residues 295–512 (ESKQMFFNIS…LSDFSRSFGC (218 aa)) are Cytoplasmic-facing.

It belongs to the AAA ATPase family. Spastin subfamily. In terms of assembly, homohexamer. The homohexamer is stabilized by ATP-binding. The homohexamer may adopt a ring conformation through which microtubules pass prior to being severed. Interacts with microtubules. Interacts (via N-terminus) with tubulin; the interaction is direct.

It localises to the membrane. The protein resides in the cytoplasm. Its subcellular location is the cytoskeleton. The protein localises to the perinuclear region. It carries out the reaction n ATP + n H2O + a microtubule = n ADP + n phosphate + (n+1) alpha/beta tubulin heterodimers.. Functionally, ATP-dependent microtubule severing protein that specifically recognizes and cuts microtubules. Probably by regulating microtubule remodeling, plays a role in new synapse formation in GABAergic DD (Dorsal D type) neurons. The sequence is that of Spastin homolog from Caenorhabditis elegans.